An 84-amino-acid chain; its full sequence is U8-theraphotoxin-Hhn1c 2 (84 aa).

An N-terminal signal peptide occupies residues 1 to 21; it reads MKVVLLVCLVWMMAMMELVSC. 5 cysteine pairs are disulfide-bonded: Cys23/Cys35, Cys29/Cys44, Cys34/Cys67, Cys54/Cys75, and Cys69/Cys81.

The protein belongs to the AVIT (prokineticin) family. As to expression, expressed by the venom gland.

It localises to the secreted. The sequence is that of U8-theraphotoxin-Hhn1c 2 from Cyriopagopus hainanus (Chinese bird spider).